The following is a 715-amino-acid chain: Polyribonucleotide nucleotidyltransferase (715 aa).

Residues D488 and D494 each coordinate Mg(2+). Residues 555-614 (PRIEVMHIPTDKIRDVIGTGGKVIREIVEKTGAKINIEDDGTVKIASSNGKEIEAARKWI) form the KH domain. An S1 motif domain is found at 624–692 (GEIYEGTVVK…ERGKVRLSMK (69 aa)).

It belongs to the polyribonucleotide nucleotidyltransferase family. Mg(2+) is required as a cofactor.

Its subcellular location is the cytoplasm. The enzyme catalyses RNA(n+1) + phosphate = RNA(n) + a ribonucleoside 5'-diphosphate. Involved in mRNA degradation. Catalyzes the phosphorolysis of single-stranded polyribonucleotides processively in the 3'- to 5'-direction. The chain is Polyribonucleotide nucleotidyltransferase from Chelativorans sp. (strain BNC1).